Reading from the N-terminus, the 123-residue chain is Large ribosomal subunit protein bL17 (123 aa).

The protein belongs to the bacterial ribosomal protein bL17 family. As to quaternary structure, part of the 50S ribosomal subunit. Contacts protein L32.

This is Large ribosomal subunit protein bL17 from Borreliella burgdorferi (strain ATCC 35210 / DSM 4680 / CIP 102532 / B31) (Borrelia burgdorferi).